Here is a 286-residue protein sequence, read N- to C-terminus: Quinone oxidoreductase 2 (286 aa).

Residues 6–11 (GATGQL), R33, 73–75 (SSS), 138–143 (GWYSEN), and R171 each bind NADP(+).

It belongs to the NmrA-type oxidoreductase family. Monomer.

It carries out the reaction a quinone + NADH + H(+) = a quinol + NAD(+). It catalyses the reaction a quinone + NADPH + H(+) = a quinol + NADP(+). In terms of biological role, quinone oxidoreductase that may play some additional role beyond quinone reduction. Potential redox sensor protein. Overexpression induces retardation of growth. This is Quinone oxidoreductase 2 (qorB) from Escherichia coli (strain K12).